The sequence spans 192 residues: Small ribosomal subunit protein uS5 (192 aa).

The S5 DRBM domain maps to 20-83; the sequence is FVDKLVHINR…EAAKRGLIRV (64 aa). Residues 162 to 192 are disordered; the sequence is SVAARRGLKVSALQARRRDADPADTSEAAVA.

The protein belongs to the universal ribosomal protein uS5 family. In terms of assembly, part of the 30S ribosomal subunit. Contacts proteins S4 and S8.

Its function is as follows. With S4 and S12 plays an important role in translational accuracy. Located at the back of the 30S subunit body where it stabilizes the conformation of the head with respect to the body. The protein is Small ribosomal subunit protein uS5 of Methylorubrum extorquens (strain CM4 / NCIMB 13688) (Methylobacterium extorquens).